Reading from the N-terminus, the 328-residue chain is uncharacterized protein (328 aa).

A signal peptide spans 1–24 (MKSIKGLGKLLLASSILFSSSAFA).

Belongs to the bacterial solute-binding protein 7 family.

Its subcellular location is the periplasm. This is an uncharacterized protein from Haemophilus influenzae (strain ATCC 51907 / DSM 11121 / KW20 / Rd).